The chain runs to 223 residues: MSLLVKICGLSTRETLETALDAGADMVGFVFFPPSPRHLSLELGRDLGRQVNRRALKVALTVDADDATLDNIMDALSPDIFQLHGKETVARLRDIKQRFGRPVMKAVPVATSADLAVLPGYAAVADRILFDARAPKDATRPGGLGAPFDWHLLENLDLNLPYMVSGGLHADNVAEALRITRAGGVDVSSGVESAPGVKDPEMIKAFIRAARATQDASQELSVR.

Belongs to the TrpF family.

It carries out the reaction N-(5-phospho-beta-D-ribosyl)anthranilate = 1-(2-carboxyphenylamino)-1-deoxy-D-ribulose 5-phosphate. Its pathway is amino-acid biosynthesis; L-tryptophan biosynthesis; L-tryptophan from chorismate: step 3/5. This chain is N-(5'-phosphoribosyl)anthranilate isomerase, found in Bradyrhizobium diazoefficiens (strain JCM 10833 / BCRC 13528 / IAM 13628 / NBRC 14792 / USDA 110).